Here is a 61-residue protein sequence, read N- to C-terminus: Myrmicitoxin(1)-Pm5a (61 aa).

Residues Met-1–Gly-23 form the signal peptide. A propeptide spanning residues Glu-24–Ser-33 is cleaved from the precursor. Gln-60 bears the Glutamine amide mark.

Belongs to the formicidae venom clade 2 family. In terms of tissue distribution, expressed by the venom gland.

The protein resides in the secreted. In terms of biological role, toxin that causes a rapid and irreversible paralysis when intrathoracically injected into insects (blowflies). Does not cause spontaneous nocifensive behaviors by intraplantar injection in mice. This is Myrmicitoxin(1)-Pm5a from Pogonomyrmex maricopa (Maricopa harvester ant).